Reading from the N-terminus, the 274-residue chain is 2,3,4,5-tetrahydropyridine-2,6-dicarboxylate N-succinyltransferase (274 aa).

It belongs to the transferase hexapeptide repeat family.

Its subcellular location is the cytoplasm. The enzyme catalyses (S)-2,3,4,5-tetrahydrodipicolinate + succinyl-CoA + H2O = (S)-2-succinylamino-6-oxoheptanedioate + CoA. The protein operates within amino-acid biosynthesis; L-lysine biosynthesis via DAP pathway; LL-2,6-diaminopimelate from (S)-tetrahydrodipicolinate (succinylase route): step 1/3. The chain is 2,3,4,5-tetrahydropyridine-2,6-dicarboxylate N-succinyltransferase from Leptothrix cholodnii (strain ATCC 51168 / LMG 8142 / SP-6) (Leptothrix discophora (strain SP-6)).